A 704-amino-acid polypeptide reads, in one-letter code: Matrix metalloproteinase-9 (704 aa).

Positions 1 to 19 (MSPRQPLVLVFLVLGCCSA) are cleaved as a signal peptide. Residues 20–106 (APRPHKPTVV…PRCGVPDLGK (87 aa)) constitute a propeptide, activation peptide. A glycan (N-linked (GlcNAc...) asparagine) is linked at Asn-38. Residues 97–104 (PRCGVPDL) carry the Cysteine switch motif. Cys-99 serves as a coordination point for Zn(2+). Asn-127 carries an N-linked (GlcNAc...) asparagine glycan. Residues Asp-131 and Asp-165 each contribute to the Ca(2+) site. The Zn(2+) site is built by His-175 and Asp-177. The Ca(2+) site is built by Asp-182, Gly-183, Asn-185, and Leu-187. His-190 is a binding site for Zn(2+). Ca(2+)-binding residues include Gly-197, Gln-199, and Asp-201. Residue His-203 participates in Zn(2+) binding. Ca(2+) contacts are provided by Asp-205, Asp-206, and Glu-208. Fibronectin type-II domains follow at residues 225-273 (ADGA…FCPS), 283-331 (GDGK…FCPT), and 342-390 (SAGE…FCPD). Disulfide bonds link Cys-230–Cys-256, Cys-244–Cys-271, Cys-288–Cys-314, Cys-302–Cys-329, Cys-347–Cys-373, and Cys-361–Cys-388. Residue His-401 coordinates Zn(2+). Glu-402 is an active-site residue. 2 residues coordinate Zn(2+): His-405 and His-411. Positions 434 to 507 (DDVRGIQHLY…PSEAPTVPVD (74 aa)) are disordered. 2 stretches are compositionally biased toward pro residues: residues 450 to 461 (EPQPPTAPPTAP) and 483 to 496 (TGPP…PPTA). A disulfide bridge connects residues Cys-513 and Cys-701. Hemopexin repeat units lie at residues 515–560 (VNIF…WPAL), 561–605 (PRKL…GLGP), 607–654 (VTQV…YPGV), and 655–701 (PLNT…ILQC).

The protein belongs to the peptidase M10A family. Exists as monomer or homodimer; disulfide-linked. Also exists as heterodimer with LCN2. Macrophages and transformed cell lines produce only the monomeric form. Interacts with ECM1. The cofactor is Zn(2+). It depends on Ca(2+) as a cofactor. In terms of processing, N- and O-glycosylated.

Its subcellular location is the secreted. It is found in the extracellular space. It localises to the extracellular matrix. It catalyses the reaction Cleavage of gelatin types I and V and collagen types IV and V.. In terms of biological role, matrix metalloproteinase that plays an essential role in local proteolysis of the extracellular matrix and in leukocyte migration. Could play a role in bone osteoclastic resorption. Cleaves KiSS1 at a Gly-|-Leu bond. Cleaves NINJ1 to generate the Secreted ninjurin-1 form. Cleaves type IV and type V collagen into large C-terminal three quarter fragments and shorter N-terminal one quarter fragments. Degrades fibronectin but not laminin or Pz-peptide. This Canis lupus familiaris (Dog) protein is Matrix metalloproteinase-9 (MMP9).